A 92-amino-acid polypeptide reads, in one-letter code: UPF0223 protein Sez_0908 (92 aa).

Belongs to the UPF0223 family.

This is UPF0223 protein Sez_0908 from Streptococcus equi subsp. zooepidemicus (strain MGCS10565).